Here is a 211-residue protein sequence, read N- to C-terminus: Thiamine-phosphate synthase (211 aa).

4-amino-2-methyl-5-(diphosphooxymethyl)pyrimidine is bound by residues 37-41 (QYRDK) and Asn69. Mg(2+) is bound by residues Asp70 and Asp89. Ser108 contributes to the 4-amino-2-methyl-5-(diphosphooxymethyl)pyrimidine binding site. 135–137 (SPT) is a binding site for 2-[(2R,5Z)-2-carboxy-4-methylthiazol-5(2H)-ylidene]ethyl phosphate. Lys138 contributes to the 4-amino-2-methyl-5-(diphosphooxymethyl)pyrimidine binding site. Residues Gly165 and 185–186 (LS) each bind 2-[(2R,5Z)-2-carboxy-4-methylthiazol-5(2H)-ylidene]ethyl phosphate.

The protein belongs to the thiamine-phosphate synthase family. The cofactor is Mg(2+).

It carries out the reaction 2-[(2R,5Z)-2-carboxy-4-methylthiazol-5(2H)-ylidene]ethyl phosphate + 4-amino-2-methyl-5-(diphosphooxymethyl)pyrimidine + 2 H(+) = thiamine phosphate + CO2 + diphosphate. The catalysed reaction is 2-(2-carboxy-4-methylthiazol-5-yl)ethyl phosphate + 4-amino-2-methyl-5-(diphosphooxymethyl)pyrimidine + 2 H(+) = thiamine phosphate + CO2 + diphosphate. The enzyme catalyses 4-methyl-5-(2-phosphooxyethyl)-thiazole + 4-amino-2-methyl-5-(diphosphooxymethyl)pyrimidine + H(+) = thiamine phosphate + diphosphate. It functions in the pathway cofactor biosynthesis; thiamine diphosphate biosynthesis; thiamine phosphate from 4-amino-2-methyl-5-diphosphomethylpyrimidine and 4-methyl-5-(2-phosphoethyl)-thiazole: step 1/1. Condenses 4-methyl-5-(beta-hydroxyethyl)thiazole monophosphate (THZ-P) and 2-methyl-4-amino-5-hydroxymethyl pyrimidine pyrophosphate (HMP-PP) to form thiamine monophosphate (TMP). This chain is Thiamine-phosphate synthase, found in Thiobacillus denitrificans (strain ATCC 25259 / T1).